We begin with the raw amino-acid sequence, 348 residues long: GMP reductase 2 (348 aa).

NADP(+) is bound by residues 26–27 (SR), Lys-78, 129–131 (DVA), and 180–181 (IG). K(+)-binding residues include Gly-181, Gly-183, and Cys-186. The Thioimidate intermediate role is filled by Cys-186. The Proton donor/acceptor role is filled by Thr-188. K(+) is bound at residue Arg-189. GMP is bound by residues 219–221 (DGG), 242–243 (GG), 268–270 (GMS), and 286–290 (RASEG). NADP(+) contacts are provided by residues Met-269 and 285–286 (YR). Lys-291 bears the N6-acetyllysine mark. 314–317 (STCT) contacts NADP(+).

This sequence belongs to the IMPDH/GMPR family. GuaC type 1 subfamily. As to quaternary structure, homotetramer.

The catalysed reaction is IMP + NH4(+) + NADP(+) = GMP + NADPH + 2 H(+). Its function is as follows. Catalyzes the irreversible NADPH-dependent deamination of GMP to IMP. It functions in the conversion of nucleobase, nucleoside and nucleotide derivatives of G to A nucleotides, and in maintaining the intracellular balance of A and G nucleotides. Plays a role in modulating cellular differentiation. This is GMP reductase 2 from Mus musculus (Mouse).